A 251-amino-acid polypeptide reads, in one-letter code: 5'-nucleotidase SurE (251 aa).

A divalent metal cation is bound by residues D8, D9, S39, and N90.

This sequence belongs to the SurE nucleotidase family. The cofactor is a divalent metal cation.

The protein localises to the cytoplasm. It catalyses the reaction a ribonucleoside 5'-phosphate + H2O = a ribonucleoside + phosphate. Functionally, nucleotidase that shows phosphatase activity on nucleoside 5'-monophosphates. In Colwellia psychrerythraea (strain 34H / ATCC BAA-681) (Vibrio psychroerythus), this protein is 5'-nucleotidase SurE.